The primary structure comprises 244 residues: Ribosomal RNA large subunit methyltransferase E (244 aa).

Glycine 81, tryptophan 83, aspartate 109, aspartate 125, and aspartate 149 together coordinate S-adenosyl-L-methionine. Lysine 189 serves as the catalytic Proton acceptor.

Belongs to the class I-like SAM-binding methyltransferase superfamily. RNA methyltransferase RlmE family.

The protein localises to the cytoplasm. It carries out the reaction uridine(2552) in 23S rRNA + S-adenosyl-L-methionine = 2'-O-methyluridine(2552) in 23S rRNA + S-adenosyl-L-homocysteine + H(+). Specifically methylates the uridine in position 2552 of 23S rRNA at the 2'-O position of the ribose in the fully assembled 50S ribosomal subunit. The sequence is that of Ribosomal RNA large subunit methyltransferase E from Cereibacter sphaeroides (strain ATCC 17023 / DSM 158 / JCM 6121 / CCUG 31486 / LMG 2827 / NBRC 12203 / NCIMB 8253 / ATH 2.4.1.) (Rhodobacter sphaeroides).